Reading from the N-terminus, the 306-residue chain is ORF-B protein (306 aa).

The next 3 helical transmembrane spans lie at 92–112, 120–140, and 161–181; these read MIQW…FPFI, LTHL…VFGW, and VIEW…IVVS.

In terms of assembly, interacts with host RACK1.

It localises to the host cytoplasm. The protein localises to the host cell membrane. This Sander vitreus (Walleye) protein is ORF-B protein.